The following is a 70-amino-acid chain: UPF0270 protein VP2791 (70 aa).

It belongs to the UPF0270 family.

The polypeptide is UPF0270 protein VP2791 (Vibrio parahaemolyticus serotype O3:K6 (strain RIMD 2210633)).